We begin with the raw amino-acid sequence, 208 residues long: MARYIGPTCKLARREGADLSLKSPARALDSKCKLEQKPGQHGAARKGKLSDYATQLREKQKVKRIYGLLERQFRNYYKKASTKKGNTGENLLQLLETRLDNVCYRMGFAVTRPAARQLVSHRGVLVNGKSVNLASYQIKAGDAITLSEKAQKQLRVQEALTVAEQHDMTPSWVEVDSKKFSGVFKAVPDRADLPSDINEALIVELYSK.

Positions 97 to 160 (TRLDNVCYRM…QKQLRVQEAL (64 aa)) constitute an S4 RNA-binding domain.

It belongs to the universal ribosomal protein uS4 family. Part of the 30S ribosomal subunit. Contacts protein S5. The interaction surface between S4 and S5 is involved in control of translational fidelity.

In terms of biological role, one of the primary rRNA binding proteins, it binds directly to 16S rRNA where it nucleates assembly of the body of the 30S subunit. Functionally, with S5 and S12 plays an important role in translational accuracy. The sequence is that of Small ribosomal subunit protein uS4 from Xanthomonas axonopodis pv. citri (strain 306).